A 796-amino-acid chain; its full sequence is Probable phosphoketolase 2 (796 aa).

Belongs to the XFP family. The cofactor is thiamine diphosphate.

The polypeptide is Probable phosphoketolase 2 (Lactiplantibacillus plantarum (strain ATCC BAA-793 / NCIMB 8826 / WCFS1) (Lactobacillus plantarum)).